Here is a 1392-residue protein sequence, read N- to C-terminus: DNA-directed RNA polymerase subunit beta'' (1392 aa).

Cysteine 224, cysteine 295, cysteine 302, and cysteine 305 together coordinate Zn(2+).

This sequence belongs to the RNA polymerase beta' chain family. RpoC2 subfamily. In terms of assembly, in plastids the minimal PEP RNA polymerase catalytic core is composed of four subunits: alpha, beta, beta', and beta''. When a (nuclear-encoded) sigma factor is associated with the core the holoenzyme is formed, which can initiate transcription. Zn(2+) serves as cofactor.

It localises to the plastid. The protein localises to the chloroplast. The enzyme catalyses RNA(n) + a ribonucleoside 5'-triphosphate = RNA(n+1) + diphosphate. DNA-dependent RNA polymerase catalyzes the transcription of DNA into RNA using the four ribonucleoside triphosphates as substrates. This chain is DNA-directed RNA polymerase subunit beta'', found in Solanum tuberosum (Potato).